A 1339-amino-acid polypeptide reads, in one-letter code: Astrotactin-2 (1339 aa).

An N-terminal signal peptide occupies residues 1 to 49 (MAAAGARLSPGPGSGLRGRPRLCFHPGPPPLLPLLLLFLLLLPPPPLLA). The Lumenal segment spans residues 50–206 (GATAAASREP…IVEEQMHILH (157 aa)). Residue asparagine 168 is glycosylated (N-linked (GlcNAc...) asparagine). A helical membrane pass occupies residues 207–227 (ISVMGGLIALLLLLLVFTVAL). The Cytoplasmic portion of the chain corresponds to 228–434 (YAQRRWQKRR…KGLLKSPVNK (207 aa)). Disordered regions lie at residues 296–316 (EEDE…EFGS) and 363–408 (TPIE…ADDE). The helical transmembrane segment at 435–455 (TALTLIAVSSCILAMVCGSQM) threads the bilayer. The Lumenal segment spans residues 456–1339 (SCPLTVKVTL…RNTYGESKGR (884 aa)). 3 consecutive EGF-like domains span residues 510–550 (VRDL…HLCV), 651–695 (PVRD…SGCY), and 699–751 (KGID…KSCL). Disulfide bonds link cysteine 514–cysteine 526, cysteine 522–cysteine 533, cysteine 535–cysteine 549, cysteine 655–cysteine 668, cysteine 662–cysteine 679, cysteine 681–cysteine 694, cysteine 703–cysteine 715, cysteine 711–cysteine 735, and cysteine 737–cysteine 750. 2 N-linked (GlcNAc...) asparagine glycosylation sites follow: asparagine 770 and asparagine 783. 3 disulfide bridges follow: cysteine 825/cysteine 987, cysteine 916/cysteine 977, and cysteine 983/cysteine 990. An N-linked (GlcNAc...) asparagine glycan is attached at asparagine 1020. Cystine bridges form between cysteine 1036–cysteine 1047, cysteine 1049–cysteine 1062, cysteine 1136–cysteine 1158, cysteine 1190–cysteine 1277, and cysteine 1298–cysteine 1321. Residues 1065-1188 (LLQPVLRLSP…SELSTVTLRT (124 aa)) enclose the Fibronectin type-III domain.

The protein belongs to the astrotactin family. In terms of assembly, interacts with ASTN1; the interaction is not calcium-dependent.

Its subcellular location is the membrane. It localises to the perikaryon. It is found in the cytoplasm. The protein localises to the cell cortex. The protein resides in the early endosome. Its subcellular location is the late endosome. It localises to the cytoplasmic vesicle. It is found in the clathrin-coated vesicle. Mediates recycling of the neuronal cell adhesion molecule ASTN1 to the anterior pole of the cell membrane in migrating neurons. Promotes ASTN1 internalization and intracellular transport of endocytosed ASTN1. Selectively binds inositol-4,5-bisphosphate, inositol-3,4,5-trisphosphate and inositol-1,3,4,5-tetrakisphosphate, suggesting it is recruited to membranes that contain lipids with a phosphoinositide headgroup. This is Astrotactin-2 (ASTN2) from Homo sapiens (Human).